A 237-amino-acid polypeptide reads, in one-letter code: 5'-methylthioadenosine/S-adenosylhomocysteine nucleosidase (237 aa).

The active-site Proton acceptor is the Glu12. Substrate-binding positions include Ala78, Ile152, and 173–174 (ME). The active-site Proton donor is the Asp197.

This sequence belongs to the PNP/UDP phosphorylase family. MtnN subfamily. In terms of assembly, homodimer.

It catalyses the reaction S-adenosyl-L-homocysteine + H2O = S-(5-deoxy-D-ribos-5-yl)-L-homocysteine + adenine. The enzyme catalyses S-methyl-5'-thioadenosine + H2O = 5-(methylsulfanyl)-D-ribose + adenine. It carries out the reaction 5'-deoxyadenosine + H2O = 5-deoxy-D-ribose + adenine. It functions in the pathway amino-acid biosynthesis; L-methionine biosynthesis via salvage pathway; S-methyl-5-thio-alpha-D-ribose 1-phosphate from S-methyl-5'-thioadenosine (hydrolase route): step 1/2. Functionally, catalyzes the irreversible cleavage of the glycosidic bond in both 5'-methylthioadenosine (MTA) and S-adenosylhomocysteine (SAH/AdoHcy) to adenine and the corresponding thioribose, 5'-methylthioribose and S-ribosylhomocysteine, respectively. Also cleaves 5'-deoxyadenosine, a toxic by-product of radical S-adenosylmethionine (SAM) enzymes, into 5-deoxyribose and adenine. Thus, is required for in vivo function of the radical SAM enzymes biotin synthase and lipoic acid synthase, that are inhibited by 5'-deoxyadenosine accumulation. The sequence is that of 5'-methylthioadenosine/S-adenosylhomocysteine nucleosidase from Hamiltonella defensa subsp. Acyrthosiphon pisum (strain 5AT).